Consider the following 376-residue polypeptide: MSRHKVYKAISSYVIIAIIIIAIVAVVGVLLLTRHPSSSSVTSTTTPTTSSSVSPSSSGPVIVYVAGAYKAIFDYLAKQFEQQTGITVDVVPGGSFGLAAQIAKGQPVSVFVPVAYIQAVELEGNRDPGWAIAFISDQMAIIYSNYTTQSPYWNQLYSNYTMAMKTNESQYWYNFFYLLTTKFSLGISNPSSDPEGLYAYLILKMAGYLYANHSFDYFINLVNHNPNVVSAPTTADFVPDLATGKLDFTFSYVSYAISQHLEYLKLPPWLSFGYYPNETSWDSFFFYKITVNGQTLKIYGNPVYLYITIPVNASNEQGAIEFVEFIVDHVQELSMFGVTPITHPLLFYQNKSDVPSQILNLLNQGVLQYGGNFSAV.

An N-terminal signal peptide occupies residues 1–31; sequence MSRHKVYKAISSYVIIAIIIIAIVAVVGVLL. A disordered region spans residues 37 to 57; sequence SSSSVTSTTTPTTSSSVSPSS.

The protein belongs to the bacterial solute-binding protein 1 family. WtpA subfamily.

This is an uncharacterized protein from Sulfurisphaera tokodaii (strain DSM 16993 / JCM 10545 / NBRC 100140 / 7) (Sulfolobus tokodaii).